A 2167-amino-acid chain; its full sequence is Glutamate synthase 1 [NADH], chloroplastic (2167 aa).

The segment at 1 to 31 is disordered; sequence MSAAQGMAYKLRTDAAPTGAGRRARRSHSSV. Residues 1–36 constitute a chloroplast transit peptide; the sequence is MSAAQGMAYKLRTDAAPTGAGRRARRSHSSVAAPYR. The active-site Nucleophile is Cys-100. Residues 100–504 form the Glutamine amidotransferase type-2 domain; sequence CGVGFVAELS…PGMMLLVDFE (405 aa). The tract at residues 1022–1042 is disordered; it reads KSNTGEGGEQPSRMEPLANGS. An FMN-binding site is contributed by 1192–1249; that stretch reads LAETHQTLVANGLRGRAILQTDGQLKTGKDVAVACLLGAEEFGFSTAPLITLGCIMMR. Cys-1245, Cys-1251, and Cys-1256 together coordinate [3Fe-4S] cluster. 1956-1970 contacts NAD(+); that stretch reads GGGDTGTDCIGTSIR.

Belongs to the glutamate synthase family. As to quaternary structure, monomer. Requires [3Fe-4S] cluster as cofactor. The cofactor is FAD. FMN is required as a cofactor. Highly expressed in roots.

The protein localises to the plastid. Its subcellular location is the chloroplast. It catalyses the reaction 2 L-glutamate + NAD(+) = L-glutamine + 2-oxoglutarate + NADH + H(+). It participates in amino-acid biosynthesis; L-glutamate biosynthesis via GLT pathway; L-glutamate from 2-oxoglutarate and L-glutamine (NAD(+) route): step 1/1. The protein operates within energy metabolism; nitrogen metabolism. Functionally, involved in glutamate biosynthesis and plays a major role in the primary ammonium ions assimilation in seedling roots. May be involved in the reutilization of glutamine in developing organs. Plays a role in the development of tillers. The sequence is that of Glutamate synthase 1 [NADH], chloroplastic from Oryza sativa subsp. japonica (Rice).